A 139-amino-acid chain; its full sequence is Large ribosomal subunit protein bL17 (139 aa).

Residues 120-139 (ESAKGQDSGPVHVEGDEEAA) are disordered.

The protein belongs to the bacterial ribosomal protein bL17 family. As to quaternary structure, part of the 50S ribosomal subunit. Contacts protein L32.

This chain is Large ribosomal subunit protein bL17, found in Parvibaculum lavamentivorans (strain DS-1 / DSM 13023 / NCIMB 13966).